The primary structure comprises 95 residues: Protein TusB (95 aa).

The protein belongs to the DsrH/TusB family. In terms of assembly, heterohexamer, formed by a dimer of trimers. The hexameric TusBCD complex contains 2 copies each of TusB, TusC and TusD. The TusBCD complex interacts with TusE.

It localises to the cytoplasm. Its function is as follows. Part of a sulfur-relay system required for 2-thiolation of 5-methylaminomethyl-2-thiouridine (mnm(5)s(2)U) at tRNA wobble positions. The polypeptide is Protein TusB (Buchnera aphidicola subsp. Baizongia pistaciae (strain Bp)).